We begin with the raw amino-acid sequence, 84 residues long: Small ribosomal subunit protein bS18 (84 aa).

The protein belongs to the bacterial ribosomal protein bS18 family. Part of the 30S ribosomal subunit. Forms a tight heterodimer with protein bS6.

Its function is as follows. Binds as a heterodimer with protein bS6 to the central domain of the 16S rRNA, where it helps stabilize the platform of the 30S subunit. This Mycobacterium leprae (strain Br4923) protein is Small ribosomal subunit protein bS18.